Here is a 602-residue protein sequence, read N- to C-terminus: Elongation factor 4 (602 aa).

The tr-type G domain maps to 7–189 (RKIRNFSIIA…AIVKNIPPPT (183 aa)). Residues 19–24 (DHGKST) and 136–139 (NKID) each bind GTP.

It belongs to the TRAFAC class translation factor GTPase superfamily. Classic translation factor GTPase family. LepA subfamily.

Its subcellular location is the cell membrane. The catalysed reaction is GTP + H2O = GDP + phosphate + H(+). Its function is as follows. Required for accurate and efficient protein synthesis under certain stress conditions. May act as a fidelity factor of the translation reaction, by catalyzing a one-codon backward translocation of tRNAs on improperly translocated ribosomes. Back-translocation proceeds from a post-translocation (POST) complex to a pre-translocation (PRE) complex, thus giving elongation factor G a second chance to translocate the tRNAs correctly. Binds to ribosomes in a GTP-dependent manner. This chain is Elongation factor 4, found in Alkaliphilus metalliredigens (strain QYMF).